The following is an 83-amino-acid chain: Small ribosomal subunit protein bS16 (83 aa).

It belongs to the bacterial ribosomal protein bS16 family.

The chain is Small ribosomal subunit protein bS16 from Magnetococcus marinus (strain ATCC BAA-1437 / JCM 17883 / MC-1).